The sequence spans 256 residues: tRNA-cytidine(32) 2-sulfurtransferase (256 aa).

The short motif at 35–40 is the PP-loop motif element; the sequence is SGGKDS. Residues C110, C113, and C201 each contribute to the [4Fe-4S] cluster site.

This sequence belongs to the TtcA family. Homodimer. It depends on Mg(2+) as a cofactor. The cofactor is [4Fe-4S] cluster.

The protein localises to the cytoplasm. The enzyme catalyses cytidine(32) in tRNA + S-sulfanyl-L-cysteinyl-[cysteine desulfurase] + AH2 + ATP = 2-thiocytidine(32) in tRNA + L-cysteinyl-[cysteine desulfurase] + A + AMP + diphosphate + H(+). It functions in the pathway tRNA modification. In terms of biological role, catalyzes the ATP-dependent 2-thiolation of cytidine in position 32 of tRNA, to form 2-thiocytidine (s(2)C32). The sulfur atoms are provided by the cysteine/cysteine desulfurase (IscS) system. The chain is tRNA-cytidine(32) 2-sulfurtransferase from Coxiella burnetii (strain Dugway 5J108-111).